We begin with the raw amino-acid sequence, 64 residues long: Translational regulator CsrA (64 aa).

This sequence belongs to the CsrA/RsmA family. In terms of assembly, homodimer; the beta-strands of each monomer intercalate to form a hydrophobic core, while the alpha-helices form wings that extend away from the core.

Its subcellular location is the cytoplasm. Functionally, a key translational regulator that binds mRNA to regulate translation initiation and/or mRNA stability. Mediates global changes in gene expression, shifting from rapid growth to stress survival by linking envelope stress, the stringent response and the catabolite repression systems. Usually binds in the 5'-UTR; binding at or near the Shine-Dalgarno sequence prevents ribosome-binding, repressing translation, binding elsewhere in the 5'-UTR can activate translation and/or stabilize the mRNA. Its function is antagonized by small RNA(s). This is Translational regulator CsrA from Thioalkalivibrio sulfidiphilus (strain HL-EbGR7).